Reading from the N-terminus, the 207-residue chain is Ribosomal RNA small subunit methyltransferase G (207 aa).

Residues Gly74, Phe79, 124-125 (VE), and Arg138 contribute to the S-adenosyl-L-methionine site.

Belongs to the methyltransferase superfamily. RNA methyltransferase RsmG family.

It localises to the cytoplasm. The catalysed reaction is guanosine(527) in 16S rRNA + S-adenosyl-L-methionine = N(7)-methylguanosine(527) in 16S rRNA + S-adenosyl-L-homocysteine. In terms of biological role, specifically methylates the N7 position of guanine in position 527 of 16S rRNA. The protein is Ribosomal RNA small subunit methyltransferase G of Hyphomonas neptunium (strain ATCC 15444).